We begin with the raw amino-acid sequence, 224 residues long: UPF0758 protein Pfl01_5539 (224 aa).

One can recognise an MPN domain in the interval 102–224 (ALENPQVVRD…PLSMAECGWM (123 aa)). Positions 173, 175, and 186 each coordinate Zn(2+). Residues 173 to 186 (HNHPSGNSDPSQAD) carry the JAMM motif motif.

The protein belongs to the UPF0758 family.

In Pseudomonas fluorescens (strain Pf0-1), this protein is UPF0758 protein Pfl01_5539.